The primary structure comprises 165 residues: Large ribosomal subunit protein uL30 (165 aa).

Belongs to the universal ribosomal protein uL30 family. As to quaternary structure, part of the 50S ribosomal subunit.

The protein is Large ribosomal subunit protein uL30 of Thermoplasma volcanium (strain ATCC 51530 / DSM 4299 / JCM 9571 / NBRC 15438 / GSS1).